We begin with the raw amino-acid sequence, 853 residues long: ATP-dependent zinc metalloprotease FtsH (853 aa).

At 1–5 (MKNKK) the chain is on the cytoplasmic side. A helical transmembrane segment spans residues 6–26 (YLQFGGIAAVILIVLFLVSLF). Residues 27 to 113 (SSDTRNFQEV…SYTTNVTQES (87 aa)) are Extracellular-facing. A helical membrane pass occupies residues 114–134 (FLMSMLSFILPMVIIFGLLMF). Topologically, residues 135–853 (FLTRMQGGGM…NPENEGDNRG (719 aa)) are cytoplasmic. An ATP-binding site is contributed by 205–212 (GPPGTGKT). A Zn(2+)-binding site is contributed by histidine 427. Residue glutamate 428 is part of the active site. Zn(2+) contacts are provided by histidine 431 and aspartate 503. Composition is skewed to basic and acidic residues over residues 619–632 (ESTRFPRQENREPV) and 639–648 (ALERGEEPPK). The interval 619 to 853 (ESTRFPRQEN…NPENEGDNRG (235 aa)) is disordered. Over residues 677-695 (PASSAGVAPAAGAAAGSYG) the composition is skewed to low complexity. Composition is skewed to polar residues over residues 728–739 (TPAQAPEQSPDS) and 770–788 (MDQSTGAEHTPGNVSQESP). Basic and acidic residues predominate over residues 796-813 (LPDHERSDYPEKAQKESV).

In the central section; belongs to the AAA ATPase family. It in the C-terminal section; belongs to the peptidase M41 family. In terms of assembly, homohexamer. Requires Zn(2+) as cofactor.

Its subcellular location is the cell membrane. Functionally, acts as a processive, ATP-dependent zinc metallopeptidase for both cytoplasmic and membrane proteins. Plays a role in the quality control of integral membrane proteins. The sequence is that of ATP-dependent zinc metalloprotease FtsH from Corynebacterium glutamicum (strain ATCC 13032 / DSM 20300 / JCM 1318 / BCRC 11384 / CCUG 27702 / LMG 3730 / NBRC 12168 / NCIMB 10025 / NRRL B-2784 / 534).